We begin with the raw amino-acid sequence, 868 residues long: uncharacterized protein (868 aa).

The protein localises to the cytoplasm. It localises to the nucleus. This is an uncharacterized protein from Schizosaccharomyces pombe (strain 972 / ATCC 24843) (Fission yeast).